The chain runs to 38 residues: VGKNVICIHSGQCLIPCIDAGMRFGICKNGICDCTPKG.

Intrachain disulfides connect C7-C27, C13-C32, and C17-C34.

In terms of tissue distribution, expressed by the venom gland.

Its subcellular location is the secreted. Blocks voltage-gated potassium (Kv) channel and augments neurite extension via NGF/TrkA signaling pathway. This chain is Toxin BmK NSPK, found in Olivierus martensii (Manchurian scorpion).